Here is a 349-residue protein sequence, read N- to C-terminus: Transmembrane protein 255A (349 aa).

Helical transmembrane passes span 30–50 (IYVTVTLLIVSVLILTVGLAA), 57–77 (VTVGGYYPGVILGFGSFLGII), 89–109 (LVASIVFISFGVIAAFCCAIV), and 226–246 (TILNIVGLFLGIITAAVLGGF). The segment at 301–329 (VFPSSPPSGLSDEPQSASPSPSYMWSSSA) is disordered. Low complexity predominate over residues 316–329 (SASPSPSYMWSSSA).

It belongs to the TMEM255 family.

Its subcellular location is the membrane. The sequence is that of Transmembrane protein 255A (TMEM255A) from Macaca fascicularis (Crab-eating macaque).